Consider the following 143-residue polypeptide: Small ribosomal subunit protein uS9 (143 aa).

The disordered stretch occupies residues 124–143; it reads PEPKKFGGKGARARFQKSYR. The span at 134–143 shows a compositional bias: basic residues; the sequence is ARARFQKSYR.

This sequence belongs to the universal ribosomal protein uS9 family.

The polypeptide is Small ribosomal subunit protein uS9 (RPS16) (Candida glabrata (strain ATCC 2001 / BCRC 20586 / JCM 3761 / NBRC 0622 / NRRL Y-65 / CBS 138) (Yeast)).